We begin with the raw amino-acid sequence, 410 residues long: Indoleamine 2,3-dioxygenase nanC (410 aa).

His309 contributes to the heme binding site.

The protein belongs to the indoleamine 2,3-dioxygenase family. Heme serves as cofactor.

The enzyme catalyses D-tryptophan + O2 = N-formyl-D-kynurenine. The catalysed reaction is L-tryptophan + O2 = N-formyl-L-kynurenine. Its pathway is secondary metabolite biosynthesis. In terms of biological role, indoleamine 2,3-dioxygenase; part of the gene cluster that mediates the biosynthesis of the benzazepine alkaloid nanangelenin A which contains an unprecedented 3,4-dihydro-1-benzazepine-2,5-dione-N-prenyl-N-acetoxy-anthranilamide scaffold. The first step of nanangelenin biosynthesis is catalyzed by the indoleamine 2,3-dioxygenase nanC which produces N-formyl-kynurenine through the catabolism of tryptophan. The two-module NRPS nanA then utilizes anthranilate (Ant) and L-kynurenine (L-Kyn) to assemble the dipeptide product nanangelenin B. The first adenylation domain of nanA (A1) loads anthranilate onto the T1 domain, while A2 loads kynurenine, generated through spontaneous nonenzymatic deformylation of the nanC-supplied N-formyl-kynurenine. The peptide bond formation between the tethered amino acids is catalyzed by the first condensation domain (C1) between anthranilate's carbonyl carbon and kynurenine's aliphatic primary amine. The second C domain (C2) catalyzes the final cyclization event between the aromatic amine of kynurenine and the tethered carbonyl carbon, yielding nanangelenin B. The terminal T3 domain enhances the catalytic efficiency of C2, suggesting the T2-tethered Ant-L-Kyn is transferred to T3 prior to cyclization by C2. Once released from nanA, nanangelenin B is then prenylated by the prenyltransferase nanD to form nanangelenin C. Nanangelenin C is then N-hydroxylated by the FAD-dependent monooxygenase nanF and further acetylated by the acetyltransferase nanB to yield nanangelenin F. Finally, the N-methyltransferase nanE methylates the amide nitrogen of 1-benzazepine to convert nanangelenin F into nanangelenin A. NanE is also able to methylate most of the intermediates of the pathway such as nanangelenin B and nanangelenin C to produce nanangelenin D and nanangelenin E, respectively. This Aspergillus nanangensis protein is Indoleamine 2,3-dioxygenase nanC.